Reading from the N-terminus, the 87-residue chain is Large ribosomal subunit protein eL31 (87 aa).

This sequence belongs to the eukaryotic ribosomal protein eL31 family.

This Methanocorpusculum labreanum (strain ATCC 43576 / DSM 4855 / Z) protein is Large ribosomal subunit protein eL31.